A 122-amino-acid chain; its full sequence is Large ribosomal subunit protein uL14 (122 aa).

This sequence belongs to the universal ribosomal protein uL14 family. Part of the 50S ribosomal subunit. Forms a cluster with proteins L3 and L19. In the 70S ribosome, L14 and L19 interact and together make contacts with the 16S rRNA in bridges B5 and B8.

In terms of biological role, binds to 23S rRNA. Forms part of two intersubunit bridges in the 70S ribosome. In Trichodesmium erythraeum (strain IMS101), this protein is Large ribosomal subunit protein uL14.